A 174-amino-acid polypeptide reads, in one-letter code: Mitochondrial holo-[acyl-carrier-protein] synthase (174 aa).

Belongs to the P-Pant transferase superfamily. AcpS family.

The protein localises to the mitochondrion. The enzyme catalyses apo-[ACP] + CoA = holo-[ACP] + adenosine 3',5'-bisphosphate + H(+). In terms of biological role, transfers the 4'-phosphopantetheine moiety from coenzyme A to a Ser of mitochondrial acyl-carrier-protein. This Eremothecium gossypii (strain ATCC 10895 / CBS 109.51 / FGSC 9923 / NRRL Y-1056) (Yeast) protein is Mitochondrial holo-[acyl-carrier-protein] synthase (PPT2).